Consider the following 125-residue polypeptide: UPF0225 protein Cgl1438/cg1626 (125 aa).

It belongs to the UPF0225 family.

This Corynebacterium glutamicum (strain ATCC 13032 / DSM 20300 / JCM 1318 / BCRC 11384 / CCUG 27702 / LMG 3730 / NBRC 12168 / NCIMB 10025 / NRRL B-2784 / 534) protein is UPF0225 protein Cgl1438/cg1626.